Here is a 525-residue protein sequence, read N- to C-terminus: GMP synthase [glutamine-hydrolyzing] (525 aa).

The 199-residue stretch at 9 to 207 (RILILDFGSQ…VLDICGCEAL (199 aa)) folds into the Glutamine amidotransferase type-1 domain. Catalysis depends on Cys86, which acts as the Nucleophile. Active-site residues include His181 and Glu183. Residues 208–400 (WTPSKIAEDA…LGLPYDMVYR (193 aa)) form the GMPS ATP-PPase domain. An ATP-binding site is contributed by 235-241 (SGGVDSS).

As to quaternary structure, homodimer.

The enzyme catalyses XMP + L-glutamine + ATP + H2O = GMP + L-glutamate + AMP + diphosphate + 2 H(+). It functions in the pathway purine metabolism; GMP biosynthesis; GMP from XMP (L-Gln route): step 1/1. Its function is as follows. Catalyzes the synthesis of GMP from XMP. The chain is GMP synthase [glutamine-hydrolyzing] from Pseudomonas fluorescens (strain Pf0-1).